Here is a 135-residue protein sequence, read N- to C-terminus: MPPNLTGYYRFVSQKNMEDYLQALNISLAVRKIALLLKPDKEIDHQGNHMMVRTLSTFRNYTVQFDVGVEFEEDLRSVDGRKCQTIVTWEEEQLVCVQKGEVPNRGWRHWLEGEMLYLELTARDAVCEQVFRKVR.

This sequence belongs to the calycin superfamily. Fatty-acid binding protein (FABP) family.

It is found in the cytoplasm. In terms of biological role, intracellular transport of retinol. The sequence is that of Retinol-binding protein 5 (RBP5) from Pongo abelii (Sumatran orangutan).